Reading from the N-terminus, the 306-residue chain is MIFQRTVQKMVKATGVGLHSGNKVTLSIMPAPVNTGIVLVRTDMNPAVAIPAKAEQVRETTMCTALVNDEGIRISTIEHLFAALAGLGIDNAVIEVDAPEIPIMDGSASPFVFLLQSAGIKEQAAPKKYLKIKRPVRVEDGDKWAELKPFKGFRVNFKIDFAHPEIARSQQHVVMDFSTSAFVKDISRARTFGFMRDIEYLRANNLALGGSMENAVVLDEYRVLNPDGLRYEDEFVKHKILDAFGDLYVAGHAILGEFTAYKTGHALNNQLVRALLAQQDAWELVSFEKEADVPVSFTVPGGAVYA.

Zn(2+)-binding residues include histidine 79, histidine 238, and aspartate 242. Residue histidine 265 is the Proton donor of the active site.

Belongs to the LpxC family. Requires Zn(2+) as cofactor.

The catalysed reaction is a UDP-3-O-[(3R)-3-hydroxyacyl]-N-acetyl-alpha-D-glucosamine + H2O = a UDP-3-O-[(3R)-3-hydroxyacyl]-alpha-D-glucosamine + acetate. Its pathway is glycolipid biosynthesis; lipid IV(A) biosynthesis; lipid IV(A) from (3R)-3-hydroxytetradecanoyl-[acyl-carrier-protein] and UDP-N-acetyl-alpha-D-glucosamine: step 2/6. Its function is as follows. Catalyzes the hydrolysis of UDP-3-O-myristoyl-N-acetylglucosamine to form UDP-3-O-myristoylglucosamine and acetate, the committed step in lipid A biosynthesis. The polypeptide is UDP-3-O-acyl-N-acetylglucosamine deacetylase (Shewanella sp. (strain ANA-3)).